Reading from the N-terminus, the 4001-residue chain is Ankyrin repeat and KH domain-containing protein mask (4001 aa).

Positions 1–14 (MNNDAKNHESDDLN) are enriched in basic and acidic residues. Disordered stretches follow at residues 1 to 61 (MNND…NRQL), 91 to 174 (KNEP…GGGS), and 391 to 494 (DTDT…FLLD). Residues 15–30 (VRSTAYFNQQTTTNQP) are compositionally biased toward polar residues. Over residues 38–61 (NNTGSGSGSNNNNNNTNQNPNRQL) the composition is skewed to low complexity. Residues 94–117 (PLTTTESSGVLTNTPLPSNSRLKV) show a composition bias toward polar residues. The segment covering 118–159 (NNNNNTNNTAKMSGTSSSQSSATPTPPTASSSTTTTTTTNIS) has biased composition (low complexity). The segment covering 160-174 (TGGGGSGSSGGGGGS) has biased composition (gly residues). Acidic residues-rich tracts occupy residues 408-425 (SESEEESVSEDDIPESDP) and 434-486 (VRED…EDAP). Serine 501 carries the post-translational modification Phosphoserine. 15 ANK repeats span residues 546–575 (SGFSRSLVAACTDNDVNTVKRLLCKGNVNL), 584–614 (DGESLLSMACSAGYYELAQVLLAMSAAQVED), 618–647 (KDSTPLMEAASAGHLDIVKLLLNHNADVNA), 651–680 (TGNTPLMFACAGGQVDVVKVLLKHGANVEE), 684–713 (NGHTPLMEAASAGHVEVAKVLLEHGAGINT), 718–747 (FKESALTLACYKGHLDMVRFLLQAGADQEH), 751–780 (EMHTALMEASMDGHVEVARLLLDSGAQVNM), 784–813 (SFESPLTLAACGGHVELATLLIERGANIEE), 817–846 (EGYTPLMEAAREGHEEMVALLLSKGANINA), 851–880 (TQETALTLACCGGFMEVAAFLIKEGANLEL), 881–910 (GASTPLMEASQEGHTDLVSFLLKKKANVHA), 914–943 (TGDTALTHACENGHTDAAGVLLSYGAELEH), 947–976 (GGRTPLMKACRAGHLCTVKFLIQKGANVNK), 981–1011 (NDHTALSLACAGGHQSVVELLLKNNADPFHK), and 1014–1043 (DNSTMLIEASKGGHTRVVELLFRYPNISPT). Disordered regions lie at residues 1046 to 1067 (AASANVTQAAPTSNQPGPNQMR) and 1306 to 1376 (QPGE…PTAL). Polar residues predominate over residues 1367–1376 (DNNQPVPTAL). A phosphoserine mark is found at serine 1389 and serine 1588. Disordered regions lie at residues 1583–1612 (GDQPKSPTETPPEMEETTMSSPTEADRLGS), 1646–1669 (SDLESECEDDAEGGAGADCEENTL), 1682–1779 (EDGI…SLPL), 1852–1872 (VVHQKQQHGEGDQQCEDDGSA), 2084–2108 (MAQHQAQQQQGVGEPLTEQQQQQLH), and 2225–2256 (TPAPSSGVSSTKSMPGGIAKKAIDKQSRKERR). 3 stretches are compositionally biased toward acidic residues: residues 1646-1657 (SDLESECEDDAE), 1685-1704 (IIVEEEEDDEEEDDDDEEQD), and 1716-1759 (DDED…EPDS). Positions 1760–1776 (DQGTGNNNNNSKSGASS) are enriched in low complexity. The span at 2084–2093 (MAQHQAQQQQ) shows a compositional bias: low complexity. Positions 2228–2237 (PSSGVSSTKS) are enriched in polar residues. ANK repeat units lie at residues 2312-2341 (NHDTALTLACAGGHEELVELLINRGANIEH), 2345-2374 (KGFTPLILAATAGHDKVVDILLKHSAELEA), 2379-2408 (TKDTPLSLACSGGRYEVVELLLSVGANKEH), 2412-2441 (SDYTPLSLAASGGYVNIIKLLLSHGAEINS), 2447-2476 (LGISPLMLAAMNGHTPAVKLLLDQGSDINA), 2481-2510 (NRNTALTLACFQGRHEVVSLLLDRRANVEH), 2514-2543 (TGLTPLMEAASGGYIEVGRVLLDKGADVNA), 2549-2578 (SRDTALTIAADKGHQKFVELLLSRNASVEV), 2582-2611 (KGNSPLWLAAHGGHLSVVELLYDHNADIDS), and 2615-2644 (RRVSCLMAAFRKGHTKIVKWMVQYVSQFPS). Residues 2674–2732 (AKEAQAVKANKNASILLEELDLERTREESRKAAAARRRERKKKKKMEKKEEKRRQQQGN) adopt a coiled-coil conformation. At serine 2687 the chain carries Phosphoserine. Threonine 2698 carries the post-translational modification Phosphothreonine. The interval 2699 to 3033 (REESRKAAAA…TSTTTAASSV (335 aa)) is disordered. Positions 2706–2719 (AAARRRERKKKKKM) are enriched in basic residues. Acidic residues predominate over residues 2739–2762 (MQGDDDDASDKDDDSDKDDEDEEA). Phosphoserine is present on residues serine 2747 and serine 2753. Positions 2793–2810 (SQSAQAAEAAANSVSTNS) are enriched in low complexity. Residues 2828-2839 (EPTQPVITSNSV) show a composition bias toward polar residues. Over residues 2868–2886 (RQLDVKKEEPALKKKEEKN) the composition is skewed to basic and acidic residues. The segment covering 2906–2941 (ALPAKQQPSSSSKLQSSESASNINSSTATNTSSANT) has biased composition (low complexity). The span at 2950 to 2960 (ASQTASATTLN) shows a compositional bias: polar residues. The segment covering 2963 to 2975 (KRTEVDGWKEVVR) has biased composition (basic and acidic residues). Positions 2995 to 3004 (TATSSATSVQ) are enriched in polar residues. A compositionally biased stretch (low complexity) spans 3012-3032 (ANSSSNSSSSLTTSTTTAASS). In terms of domain architecture, KH spans 3036–3100 (MTCKKVQVPV…DATKQAHMLI (65 aa)). Low complexity-rich tracts occupy residues 3156-3178 (ASTTSTSSSSSASSTTPAGASYS), 3195-3227 (SGRSSTSVKSNGSSTKVSASSGSGSRSGRAGSS), and 3244-3257 (NGVIKSKSESSSKS). Disordered regions lie at residues 3156 to 3329 (ASTT…GQGG), 3383 to 3457 (KPIA…QTSQ), 3520 to 3636 (AVGD…PPTA), and 3744 to 3786 (IFPQ…GGAA). Residues 3262–3278 (QKSSTTLGKSSTVSPGA) show a composition bias toward polar residues. A compositionally biased stretch (low complexity) spans 3396–3416 (GSPTQVQQQHQTQQQQQQQLP). A compositionally biased stretch (pro residues) spans 3417–3427 (QPAPVPGPQPQ). Over residues 3428-3457 (QQPLQQQQQQQAPQQQPQQPNQQQQPQTSQ) the composition is skewed to low complexity. The segment covering 3539–3559 (NILSSPVGSSKASSNHSTSPP) has biased composition (polar residues). A compositionally biased stretch (low complexity) spans 3565 to 3577 (QQQQQQQPQSSQQ). Serine 3596 carries the post-translational modification Phosphoserine. A compositionally biased stretch (low complexity) spans 3774–3786 (PPGTGARQPGGAA). Serine 3820, serine 3822, and serine 3825 each carry phosphoserine. Positions 3876 to 3945 (KAQPPGLQQP…HNMQAPPNMS (70 aa)) are disordered. A compositionally biased stretch (low complexity) spans 3891–3910 (SQQQQQQPLNWLKQQPQQQQ).

In terms of assembly, may interact with Unc-89 (via protein kinase domain 1 or 2). In terms of tissue distribution, expressed ubiquitously in eye imaginal disk, slightly higher expression is seen in presumptive photoreceptors. Expressed in indirect flight muscle (IFM) (at protein level).

The protein localises to the cytoplasm. It localises to the myofibril. It is found in the sarcomere. Its subcellular location is the z line. The protein resides in the m line. Its function is as follows. Mediator of receptor tyrosine kinase (RTK) signaling, and may act either downstream of MAPK or transduce signaling through a parallel branch of the RTK pathway. Required for the development and organization of indirect flight muscle sarcomeres by regulating the formation of M line and H zone and the correct assembly of thick and thin filaments in the sarcomere. This Drosophila melanogaster (Fruit fly) protein is Ankyrin repeat and KH domain-containing protein mask.